The following is a 619-amino-acid chain: Enolase 4 (619 aa).

Positions 173–184 (DKERKELEKSQE) are enriched in basic and acidic residues. The segment at 173 to 236 (DKERKELEKS…PPEPPEPVLH (64 aa)) is disordered. Over residues 188–206 (PAPPPVTLPPPPPPPPPPP) the composition is skewed to pro residues. Glutamate 302 provides a ligand contact to substrate. The segment at 333–354 (TLPPPKQETKKGHNGSKRAQPP) is disordered. Lysine 497 acts as the Proton acceptor in catalysis. Lysine 548 is a substrate binding site.

Belongs to the enolase family. As to quaternary structure, interacts with ENO1. Isoform 1 and isoform 4 interact with AKAP4. In terms of processing, synthesized as an approximately 70-kDa precursor, which then undergoes proteolytic cleavage to an approximately 60-kDa enzyme; HOATZ associates directly or indirectly with ENO4 to mediate this process before its transport to mature flagella. Testis-specific. Expressed in spermatids and ependyma (at protein level). In terms of tissue distribution, expressed at higher levels in late spermatids than in pachytene spermatocytes. As to expression, expressed at higher levels in pachytene spermatocytes than in late spermatids.

It carries out the reaction (2R)-2-phosphoglycerate = phosphoenolpyruvate + H2O. Its pathway is carbohydrate degradation; glycolysis; pyruvate from D-glyceraldehyde 3-phosphate: step 4/5. Required for sperm motility, function and male fertility. May be involved in the normal assembly of the sperm fibrous sheath and provides most of the enolase activity in sperm. This is Enolase 4 (Eno4) from Mus musculus (Mouse).